The sequence spans 435 residues: RuBisCO large subunit-binding protein subunit beta-1 (435 aa).

It belongs to the chaperonin (HSP60) family. In terms of assembly, oligomer of probably six alpha and six beta subunits.

The protein localises to the plastid. The protein resides in the chloroplast. Functionally, this protein binds RuBisCO small and large subunits and is implicated in the assembly of the enzyme oligomer. The polypeptide is RuBisCO large subunit-binding protein subunit beta-1 (Chlamydomonas reinhardtii (Chlamydomonas smithii)).